A 524-amino-acid polypeptide reads, in one-letter code: Peptide chain release factor 3 (524 aa).

The tr-type G domain maps to Ser9 to Ile275. Residues Ser18–Thr25, Asp86–His90, and Asn140–Asp143 contribute to the GTP site.

It belongs to the TRAFAC class translation factor GTPase superfamily. Classic translation factor GTPase family. PrfC subfamily.

It is found in the cytoplasm. Functionally, increases the formation of ribosomal termination complexes and stimulates activities of RF-1 and RF-2. It binds guanine nucleotides and has strong preference for UGA stop codons. It may interact directly with the ribosome. The stimulation of RF-1 and RF-2 is significantly reduced by GTP and GDP, but not by GMP. In Dechloromonas aromatica (strain RCB), this protein is Peptide chain release factor 3.